A 469-amino-acid polypeptide reads, in one-letter code: MTRPVRTRFAPSPTGFIHLGNIRSALYPWAFARKMKGTFVLRIEDTDVERSSQEAVDAILEGMQWLGLDFDEGPIYQMQRMDRYREVLAQMLEKGLAYPCYMSAEELDALRERQREAGLKPRYDGTWRPEPGKVLPEPPAGVKPVLRFRNPLTGTVVWDDAVKGRVEISNEELDDLVIARPDGTPIYNFCVVVDDMDMGITHVIRGDDHVNNTPRQINILNALGGEPPVYAHLPTVLNEQGEKMSKRHGAMSVMAYRDAGFLPEAVVNYLARLGWSHGDAEIFSREQFVEWFDLEHLGKSPAQYDHSKLSWLNAHYIKEADNARLAELAKPFLDALGIDDAAIATGPALDAVVGLMKDRATTVKEIAEGATMFYRVPAPEADALAQHVTDAVRPALADLVAALKAADWTKEAVSAALKATLAAHKLKMPQLAMPVRLLVAGTTHTPSIDAVLVLFGRDVVVSRIEAALA.

Residues 11 to 21 (PSPTGFIHLGN) carry the 'HIGH' region motif. The short motif at 243-247 (KMSKR) is the 'KMSKS' region element. Lys-246 is an ATP binding site.

The protein belongs to the class-I aminoacyl-tRNA synthetase family. Glutamate--tRNA ligase type 1 subfamily. Monomer.

It localises to the cytoplasm. The enzyme catalyses tRNA(Glu) + L-glutamate + ATP = L-glutamyl-tRNA(Glu) + AMP + diphosphate. Functionally, catalyzes the attachment of glutamate to tRNA(Glu) in a two-step reaction: glutamate is first activated by ATP to form Glu-AMP and then transferred to the acceptor end of tRNA(Glu). The chain is Glutamate--tRNA ligase from Burkholderia cenocepacia (strain ATCC BAA-245 / DSM 16553 / LMG 16656 / NCTC 13227 / J2315 / CF5610) (Burkholderia cepacia (strain J2315)).